Reading from the N-terminus, the 440-residue chain is Enolase 1-2 (440 aa).

Residues His-160 and Glu-169 each contribute to the substrate site. The active-site Proton donor is Glu-212. Residues Asp-247, Glu-296, and Asp-321 each contribute to the Mg(2+) site. Positions 296 and 321 each coordinate substrate. Lys-346 functions as the Proton acceptor in the catalytic mechanism. Substrate-binding positions include 373 to 376 (SHRS) and Lys-397.

It belongs to the enolase family. As to quaternary structure, homodimer. Mg(2+) serves as cofactor.

Its subcellular location is the cytoplasm. It catalyses the reaction (2R)-2-phosphoglycerate = phosphoenolpyruvate + H2O. The protein operates within carbohydrate degradation; glycolysis; pyruvate from D-glyceraldehyde 3-phosphate: step 4/5. This chain is Enolase 1-2 (eno102), found in Schizosaccharomyces pombe (strain 972 / ATCC 24843) (Fission yeast).